The following is a 241-amino-acid chain: 1-(5-phosphoribosyl)-5-[(5-phosphoribosylamino)methylideneamino] imidazole-4-carboxamide isomerase (241 aa).

Catalysis depends on Asp-11, which acts as the Proton acceptor. Asp-130 functions as the Proton donor in the catalytic mechanism.

This sequence belongs to the HisA/HisF family.

It is found in the cytoplasm. It carries out the reaction 1-(5-phospho-beta-D-ribosyl)-5-[(5-phospho-beta-D-ribosylamino)methylideneamino]imidazole-4-carboxamide = 5-[(5-phospho-1-deoxy-D-ribulos-1-ylimino)methylamino]-1-(5-phospho-beta-D-ribosyl)imidazole-4-carboxamide. It functions in the pathway amino-acid biosynthesis; L-histidine biosynthesis; L-histidine from 5-phospho-alpha-D-ribose 1-diphosphate: step 4/9. In Acidothermus cellulolyticus (strain ATCC 43068 / DSM 8971 / 11B), this protein is 1-(5-phosphoribosyl)-5-[(5-phosphoribosylamino)methylideneamino] imidazole-4-carboxamide isomerase.